Here is a 311-residue protein sequence, read N- to C-terminus: Olfactory receptor 10D1B (311 aa).

At M1–M24 the chain is on the extracellular side. A helical transmembrane segment spans residues L25–L45. The Cytoplasmic portion of the chain corresponds to A46–H54. A helical membrane pass occupies residues T55–S75. Topologically, residues S76 to C95 are extracellular. C95 and C187 are oxidised to a cystine. A helical membrane pass occupies residues V96–M116. The Cytoplasmic segment spans residues A117–R137. A helical membrane pass occupies residues I138–T158. At T159–T192 the chain is on the extracellular side. Residues L193–L213 traverse the membrane as a helical segment. At T214–S237 the chain is on the cytoplasmic side. Residues T238–L258 traverse the membrane as a helical segment. The Extracellular segment spans residues R259 to Q271. The helical transmembrane segment at I272–L288 threads the bilayer. Topologically, residues R289 to L311 are cytoplasmic.

This sequence belongs to the G-protein coupled receptor 1 family.

It localises to the cell membrane. Odorant receptor. This is Olfactory receptor 10D1B from Mus musculus (Mouse).